The following is an 86-amino-acid chain: YcgL domain-containing protein IL1825 (86 aa).

One can recognise a YcgL domain in the interval Met1–Asn85.

This Idiomarina loihiensis (strain ATCC BAA-735 / DSM 15497 / L2-TR) protein is YcgL domain-containing protein IL1825.